The following is a 306-amino-acid chain: D-alanine--D-alanine ligase (306 aa).

The ATP-grasp domain occupies 102-300; that stretch reads KHVAKAAGIP…FGEFLRWMVE (199 aa). Residue 128-183 participates in ATP binding; sequence PMKPPYVVKPVREGSSFGVVIVKEDQSHPPQVITSSEWRYGDRVMVERYIAGRELT. 3 residues coordinate Mg(2+): aspartate 252, glutamate 267, and asparagine 269.

Belongs to the D-alanine--D-alanine ligase family. The cofactor is Mg(2+). Requires Mn(2+) as cofactor.

The protein localises to the cytoplasm. It carries out the reaction 2 D-alanine + ATP = D-alanyl-D-alanine + ADP + phosphate + H(+). The protein operates within cell wall biogenesis; peptidoglycan biosynthesis. Its function is as follows. Cell wall formation. This is D-alanine--D-alanine ligase from Sinorhizobium fredii (strain NBRC 101917 / NGR234).